Here is a 291-residue protein sequence, read N- to C-terminus: MKRIALFLATNLAVMIVFSIVLNIVYAVTGIQQGSLSGLLVMAVLFGFGGSLISLMMSKSMALRSVGGEVIEQPRNETEHWLLETVSRQAQQVGIGMPTVAIYDSPDMNAFATGAKRDDSLVAVSTGLLHSMTRDEAEAVLAHEVSHIANGDMITMTLMQGVVNTFVIFLSRMIANAVSGFTSSDEEGEGEGGSFMTYFIVSTILELAFGFLASFLTMWFSRHREFHADAGAAQLVGKQKMIAALERLRMGQESQLEGSMMAFGINGKKSLTELLMSHPPLEKRIDALRQM.

The next 2 membrane-spanning stretches (helical) occupy residues 4–24 (IALF…VLNI) and 36–56 (LSGL…ISLM). Position 143 (His-143) interacts with Zn(2+). Glu-144 is a catalytic residue. A Zn(2+)-binding site is contributed by His-147. Transmembrane regions (helical) follow at residues 151–171 (GDMI…IFLS) and 199–219 (FIVS…LTMW). Residue Glu-225 coordinates Zn(2+).

It belongs to the peptidase M48B family. Requires Zn(2+) as cofactor.

The protein resides in the cell inner membrane. This is Protease HtpX from Aliivibrio fischeri (strain MJ11) (Vibrio fischeri).